Consider the following 453-residue polypeptide: Chromosomal replication initiator protein DnaA (453 aa).

Residues 1–74 (MKEKQFWNRI…GFEIYDAEIT (74 aa)) are domain I, interacts with DnaA modulators. The segment at 74–113 (TPHYIFTKPQDTTSSQVEEATNLTLYDYSPKLVSIPYSDT) is domain II. The segment at 114–331 (GLKEKYTFDN…GAINDITLIA (218 aa)) is domain III, AAA+ region. The ATP site is built by Gly158, Gly160, Lys161, and Thr162. Positions 332 to 453 (RVKKIKDITI…EIESIKKKIK (122 aa)) are domain IV, binds dsDNA.

It belongs to the DnaA family. In terms of assembly, oligomerizes as a right-handed, spiral filament on DNA at oriC.

The protein localises to the cytoplasm. Its function is as follows. Plays an essential role in the initiation and regulation of chromosomal replication. ATP-DnaA binds to the origin of replication (oriC) to initiate formation of the DNA replication initiation complex once per cell cycle. Binds the DnaA box (a 9 base pair repeat at the origin) and separates the double-stranded (ds)DNA. Forms a right-handed helical filament on oriC DNA; dsDNA binds to the exterior of the filament while single-stranded (ss)DNA is stabiized in the filament's interior. The ATP-DnaA-oriC complex binds and stabilizes one strand of the AT-rich DNA unwinding element (DUE), permitting loading of DNA polymerase. After initiation quickly degrades to an ADP-DnaA complex that is not apt for DNA replication. Binds acidic phospholipids. In Streptococcus pneumoniae (strain P1031), this protein is Chromosomal replication initiator protein DnaA.